Here is a 134-residue protein sequence, read N- to C-terminus: Profilin (134 aa).

This sequence belongs to the profilin family. Occurs in many kinds of cells as a complex with monomeric actin in a 1:1 ratio.

It localises to the cytoplasm. The protein resides in the cytoskeleton. In terms of biological role, binds to actin and affects the structure of the cytoskeleton. At high concentrations, profilin prevents the polymerization of actin, whereas it enhances it at low concentrations. By binding to PIP2, it inhibits the formation of IP3 and DG. In Daucus carota (Wild carrot), this protein is Profilin.